A 325-amino-acid polypeptide reads, in one-letter code: ATPase ASNA1 homolog 2 (325 aa).

22-29 (KGGVGKTT) provides a ligand contact to ATP. Residue Asp51 is part of the active site. The ATP site is built by Glu231 and Asn258. Positions 267 and 270 each coordinate Zn(2+).

It belongs to the arsA ATPase family. In terms of assembly, homodimer.

The protein localises to the cytoplasm. The protein resides in the endoplasmic reticulum. Functionally, ATPase required for the post-translational delivery of tail-anchored (TA) proteins to the endoplasmic reticulum. Recognizes and selectively binds the transmembrane domain of TA proteins in the cytosol. This complex then targets to the endoplasmic reticulum by membrane-bound receptors, where the tail-anchored protein is released for insertion. This process is regulated by ATP binding and hydrolysis. ATP binding drives the homodimer towards the closed dimer state, facilitating recognition of newly synthesized TA membrane proteins. ATP hydrolysis is required for insertion. Subsequently, the homodimer reverts towards the open dimer state, lowering its affinity for the membrane-bound receptor, and returning it to the cytosol to initiate a new round of targeting. The protein is ATPase ASNA1 homolog 2 of Paramecium tetraurelia.